We begin with the raw amino-acid sequence, 420 residues long: Phytoene synthase 1, chloroplastic (420 aa).

The N-terminal 70 residues, 1–70 (MAAITLLRSA…GEIARTSPVY (70 aa)), are a transit peptide targeting the chloroplast.

The protein belongs to the phytoene/squalene synthase family. In terms of tissue distribution, expressed in leaves. Highly expressed in developing leaves. Expressed at low levels in roots.

Its subcellular location is the plastid. The protein resides in the chloroplast membrane. It is found in the chloroplast. The protein localises to the plastoglobule. It catalyses the reaction 2 (2E,6E,10E)-geranylgeranyl diphosphate = 15-cis-phytoene + 2 diphosphate. Catalyzes the conversion of geranylgeranyl diphosphate to phytoene. Mediates the first committed step in carotenoid biosynthesis. This chain is Phytoene synthase 1, chloroplastic, found in Oryza sativa subsp. japonica (Rice).